The sequence spans 324 residues: Phospho-N-acetylmuramoyl-pentapeptide-transferase (324 aa).

The next 10 membrane-spanning stretches (helical) occupy residues 5 to 25 (GLLV…PLFI), 52 to 72 (PTMG…IMAI), 77 to 97 (LGAE…IGFL), 117 to 137 (LLGQ…QGFD), 147 to 167 (ITFD…IGGS), 176 to 196 (LDGL…IIAV), 202 to 222 (AVAI…VFNA), 227 to 247 (VFMG…VAIL), 253 to 273 (LLVI…IQVI), and 302 to 322 (VVVT…YIGV).

Belongs to the glycosyltransferase 4 family. MraY subfamily. Mg(2+) serves as cofactor.

It is found in the cell membrane. The enzyme catalyses UDP-N-acetyl-alpha-D-muramoyl-L-alanyl-gamma-D-glutamyl-meso-2,6-diaminopimeloyl-D-alanyl-D-alanine + di-trans,octa-cis-undecaprenyl phosphate = di-trans,octa-cis-undecaprenyl diphospho-N-acetyl-alpha-D-muramoyl-L-alanyl-D-glutamyl-meso-2,6-diaminopimeloyl-D-alanyl-D-alanine + UMP. Its pathway is cell wall biogenesis; peptidoglycan biosynthesis. In terms of biological role, catalyzes the initial step of the lipid cycle reactions in the biosynthesis of the cell wall peptidoglycan: transfers peptidoglycan precursor phospho-MurNAc-pentapeptide from UDP-MurNAc-pentapeptide onto the lipid carrier undecaprenyl phosphate, yielding undecaprenyl-pyrophosphoryl-MurNAc-pentapeptide, known as lipid I. This is Phospho-N-acetylmuramoyl-pentapeptide-transferase from Bacillus cytotoxicus (strain DSM 22905 / CIP 110041 / 391-98 / NVH 391-98).